The sequence spans 542 residues: Phenylacetone monooxygenase (542 aa).

FAD-binding positions include serine 27, glutamate 46, 54-57 (VWYW), aspartate 66, tyrosine 72, valine 119, and glutamine 152. NADP(+) is bound at residue 64-66 (RCD). Residues 194–200 (TGSSGIQ), 217–218 (RT), and 336–337 (KR) each bind NADP(+). Position 446 (methionine 446) interacts with FAD. Residue tryptophan 501 coordinates NADP(+).

It belongs to the FAD-binding monooxygenase family. In terms of assembly, monomer. FAD serves as cofactor.

The enzyme catalyses phenylacetone + NADPH + O2 + H(+) = benzyl acetate + NADP(+) + H2O. Catalyzes a Baeyer-Villiger oxidation reaction, i.e. the insertion of an oxygen atom into a carbon-carbon bond adjacent to a carbonyl, which converts ketones to esters. Is most efficient with phenylacetone as substrate, leading to the formation of benzyl acetate. Can also oxidize other aromatic ketones (benzylacetone, alpha-methylphenylacetone and 4-hydroxyacetophenone), some aliphatic ketones (dodecan-2-one and bicyclohept-2-en-6-one) and sulfides (e.g. methyl 4-tolylsulfide). In Thermobifida fusca (strain YX), this protein is Phenylacetone monooxygenase (pamO).